Consider the following 263-residue polypeptide: Thymidylate synthase (263 aa).

DUMP is bound by residues R25 and 123–124; that span reads RR. The active-site Nucleophile is C143. DUMP contacts are provided by residues 163–166, N174, and 204–206; these read RSGD and HIY. Residue D166 participates in (6R)-5,10-methylene-5,6,7,8-tetrahydrofolate binding. (6R)-5,10-methylene-5,6,7,8-tetrahydrofolate is bound at residue S262.

The protein belongs to the thymidylate synthase family. Bacterial-type ThyA subfamily. Homodimer.

It localises to the cytoplasm. It catalyses the reaction dUMP + (6R)-5,10-methylene-5,6,7,8-tetrahydrofolate = 7,8-dihydrofolate + dTMP. Its pathway is pyrimidine metabolism; dTTP biosynthesis. Catalyzes the reductive methylation of 2'-deoxyuridine-5'-monophosphate (dUMP) to 2'-deoxythymidine-5'-monophosphate (dTMP) while utilizing 5,10-methylenetetrahydrofolate (mTHF) as the methyl donor and reductant in the reaction, yielding dihydrofolate (DHF) as a by-product. This enzymatic reaction provides an intracellular de novo source of dTMP, an essential precursor for DNA biosynthesis. The sequence is that of Thymidylate synthase from Clostridium beijerinckii (strain ATCC 51743 / NCIMB 8052) (Clostridium acetobutylicum).